A 499-amino-acid chain; its full sequence is Probable cytosol aminopeptidase (499 aa).

Mn(2+)-binding residues include Lys-263 and Asp-268. Lys-275 is a catalytic residue. Mn(2+)-binding residues include Asp-286, Asp-345, and Glu-347. Arg-349 is an active-site residue.

It belongs to the peptidase M17 family. Mn(2+) serves as cofactor.

It is found in the cytoplasm. It catalyses the reaction Release of an N-terminal amino acid, Xaa-|-Yaa-, in which Xaa is preferably Leu, but may be other amino acids including Pro although not Arg or Lys, and Yaa may be Pro. Amino acid amides and methyl esters are also readily hydrolyzed, but rates on arylamides are exceedingly low.. It carries out the reaction Release of an N-terminal amino acid, preferentially leucine, but not glutamic or aspartic acids.. Functionally, presumably involved in the processing and regular turnover of intracellular proteins. Catalyzes the removal of unsubstituted N-terminal amino acids from various peptides. The polypeptide is Probable cytosol aminopeptidase (Chlamydia caviae (strain ATCC VR-813 / DSM 19441 / 03DC25 / GPIC) (Chlamydophila caviae)).